The primary structure comprises 98 residues: Acylphosphatase (98 aa).

Residues 10-96 enclose the Acylphosphatase-like domain; the sequence is ARLLRIRGRV…TDGAGFDCLP (87 aa). Active-site residues include Arg25 and Asn43.

Belongs to the acylphosphatase family.

It carries out the reaction an acyl phosphate + H2O = a carboxylate + phosphate + H(+). This chain is Acylphosphatase (acyP), found in Azoarcus sp. (strain BH72).